The sequence spans 353 residues: Guanine nucleotide-binding protein subunit alpha (353 aa).

Glycine 2 carries the N-myristoyl glycine lipid modification. Cysteine 3 carries S-palmitoyl cysteine lipidation. The G-alpha domain maps to 33-353 (NEIKMLLLGA…QLHLRECGLL (321 aa)). The G1 motif stretch occupies residues 36 to 49 (KMLLLGAGESGKST). Residues glutamate 44, serine 45, glycine 46, lysine 47, serine 48, threonine 49, aspartate 150, leucine 175, threonine 181, glycine 203, asparagine 269, lysine 270, aspartate 272, and alanine 325 each contribute to the GTP site. Serine 48 contributes to the Mg(2+) binding site. A G2 motif region spans residues 173–181 (DILRSRVKT). Mg(2+) is bound at residue threonine 181. A G3 motif region spans residues 196–205 (YKLFDVGGQR). The tract at residues 265-272 (ILFLNKID) is G4 motif. The segment at 323–328 (TCATDT) is G5 motif.

It belongs to the G-alpha family. G(q) subfamily. In terms of assembly, g proteins are composed of 3 units; alpha, beta and gamma. The alpha chain contains the guanine nucleotide binding site. It depends on Mg(2+) as a cofactor.

Its function is as follows. Guanine nucleotide-binding proteins (G proteins) are involved as modulators or transducers in various transmembrane signaling systems. The protein is Guanine nucleotide-binding protein subunit alpha (CGP1) of Coprinellus congregatus (Inky cap fungus).